A 459-amino-acid chain; its full sequence is Bifunctional protein GlmU (459 aa).

Residues 1–230 (MVKRYAVILA…FEETIGVNDR (230 aa)) are pyrophosphorylase. UDP-N-acetyl-alpha-D-glucosamine is bound by residues 9-12 (LAAG), Lys-23, Gln-73, and 78-79 (GT). Asp-103 serves as a coordination point for Mg(2+). UDP-N-acetyl-alpha-D-glucosamine is bound by residues Gly-140, Glu-155, Asn-170, and Asn-228. Asn-228 lines the Mg(2+) pocket. The tract at residues 231–251 (VALAEAEKIMRERICRKHMMN) is linker. The tract at residues 252 to 459 (GVTIIDPAHT…VDRLSIKKNS (208 aa)) is N-acetyltransferase. Residues Arg-333 and Lys-351 each coordinate UDP-N-acetyl-alpha-D-glucosamine. The active-site Proton acceptor is His-363. Residues Tyr-366 and Asn-377 each contribute to the UDP-N-acetyl-alpha-D-glucosamine site. Residues 386-387 (NY), Ala-423, and Arg-440 contribute to the acetyl-CoA site.

This sequence in the N-terminal section; belongs to the N-acetylglucosamine-1-phosphate uridyltransferase family. It in the C-terminal section; belongs to the transferase hexapeptide repeat family. In terms of assembly, homotrimer. Mg(2+) is required as a cofactor.

The protein resides in the cytoplasm. The catalysed reaction is alpha-D-glucosamine 1-phosphate + acetyl-CoA = N-acetyl-alpha-D-glucosamine 1-phosphate + CoA + H(+). It catalyses the reaction N-acetyl-alpha-D-glucosamine 1-phosphate + UTP + H(+) = UDP-N-acetyl-alpha-D-glucosamine + diphosphate. Its pathway is nucleotide-sugar biosynthesis; UDP-N-acetyl-alpha-D-glucosamine biosynthesis; N-acetyl-alpha-D-glucosamine 1-phosphate from alpha-D-glucosamine 6-phosphate (route II): step 2/2. It participates in nucleotide-sugar biosynthesis; UDP-N-acetyl-alpha-D-glucosamine biosynthesis; UDP-N-acetyl-alpha-D-glucosamine from N-acetyl-alpha-D-glucosamine 1-phosphate: step 1/1. The protein operates within bacterial outer membrane biogenesis; LPS lipid A biosynthesis. Catalyzes the last two sequential reactions in the de novo biosynthetic pathway for UDP-N-acetylglucosamine (UDP-GlcNAc). The C-terminal domain catalyzes the transfer of acetyl group from acetyl coenzyme A to glucosamine-1-phosphate (GlcN-1-P) to produce N-acetylglucosamine-1-phosphate (GlcNAc-1-P), which is converted into UDP-GlcNAc by the transfer of uridine 5-monophosphate (from uridine 5-triphosphate), a reaction catalyzed by the N-terminal domain. The chain is Bifunctional protein GlmU from Geobacillus sp. (strain WCH70).